The following is a 364-amino-acid chain: Paraneoplastic antigen Ma2 homolog (364 aa).

N-acetylalanine is present on alanine 2. Acidic residues predominate over residues glutamate 335 to aspartate 353. A disordered region spans residues glutamate 335–aspartate 364.

This sequence belongs to the PNMA family.

Its subcellular location is the nucleus. The protein resides in the nucleolus. The sequence is that of Paraneoplastic antigen Ma2 homolog (PNMA2) from Pongo abelii (Sumatran orangutan).